Reading from the N-terminus, the 176-residue chain is Sigma intracellular receptor 2 (176 aa).

The Cytoplasmic segment spans residues 1–9; the sequence is MGALAARRC. A helical membrane pass occupies residues 10-30; it reads VEWLLGLYFVSHIPITLFIDL. An EXPERA domain is found at 10-158; the sequence is VEWLLGLYFV…PYLIIPLILL (149 aa). At 31–68 the chain is on the lumenal side; it reads QAVLPPELYPQEFSNLLRWYSKEFKDPLMQEPPVWFKS. Residues 69–89 form a helical membrane-spanning segment; that stretch reads FLLCELVFQLPFFPIAAYAFF. Residues V75 and Q77 each coordinate cholesterol. The Cytoplasmic portion of the chain corresponds to 90 to 99; that stretch reads KGSCRWIRIP. A helical membrane pass occupies residues 100-120; sequence AIIYAAHTITTLIPILYTLLF. Topologically, residues 121–140 are lumenal; that stretch reads EDFSKAVAFKGQRPESFRER. The chain crosses the membrane as a helical span at residues 141–161; sequence LTLVGVYAPYLIIPLILLLFM. Residues 162-176 are Cytoplasmic-facing; the sequence is LRNPYYKYEEKRKKK. Positions 172–176 match the ER retention motif motif; it reads KRKKK.

This sequence belongs to the TMEM97/sigma-2 receptor family. In terms of assembly, homodimer. Interacts with NPC1; the interaction impairs NPC1-mediated cholesterol transport. Interacts with PGRMC1 and LDLR; the interaction increases LDL internalization. Interacts with histatin 1/HTN1; the interaction induces HTN1-stimulating wound healing. Interacts with TSPO.

Its subcellular location is the rough endoplasmic reticulum membrane. It is found in the nucleus membrane. Functionally, sigma-2 receptor which contributes to ameliorate dysfunctional cellular processes and slow degenerative progression by regulating cell functions including cholesterol biosynthesis/trafficking, membrane trafficking, autophagy, lipid membrane-bound protein trafficking, and receptor stabilization at the cell surface. Forms a ternary complex with PGRMC1 receptor and low density lipoprotein receptor/LDLR at the plasma membrane, which increases LDLR-mediated LDL cholesterol internalization. Decreases lysosomal sterol transporter NPC1 availability to the cell, probably through NPC1-binding, hence controlling lipid transport, including cholesterol and LBPA, outside of late endosome/lysosome. Binds regio- and stereoselective ligand 20(S)-hydroxycholesterol (20(S)-OHC) which enhances TMEM97-NPC1 interaction and decreases TMEM97-PGRMC1 and TMEM97-TSPO interactions, thereby linking OHC binding to cholesterol homeostasis. Also able to bind cholesterol. Binds histatin 1 (Hst 1)/HN1 salivary peptide at the ER membrane, which is critical for increasing mitochondria-ER contacts and stimulating Hst1 wound healing properties. May alter the activity of some cytochrome P450 proteins. Although shows homologies with sterol isomerases (EXPERA domain), not able to catalyze sterol isomerization. However, may act as sensors of these molecules. Acts as a quality control factor in the ER, promoting the proteolytic degradation of nonproductive and extramitochondrial precursor proteins in the ER membrane thus removing them from the ER surface. This chain is Sigma intracellular receptor 2, found in Mus musculus (Mouse).